We begin with the raw amino-acid sequence, 93 residues long: Small ribosomal subunit protein uS19 (93 aa).

Belongs to the universal ribosomal protein uS19 family.

Functionally, protein S19 forms a complex with S13 that binds strongly to the 16S ribosomal RNA. This chain is Small ribosomal subunit protein uS19, found in Nitratidesulfovibrio vulgaris (strain DSM 19637 / Miyazaki F) (Desulfovibrio vulgaris).